The sequence spans 238 residues: Uridylate kinase (238 aa).

12 to 15 (KLSG) is a binding site for ATP. Glycine 54 is a UMP binding site. ATP is bound by residues glycine 55 and arginine 59. UMP-binding positions include aspartate 74 and 135-142 (TGNPFFTT). Residues threonine 162, tyrosine 168, and aspartate 171 each coordinate ATP.

It belongs to the UMP kinase family. As to quaternary structure, homohexamer.

It localises to the cytoplasm. It catalyses the reaction UMP + ATP = UDP + ADP. Its pathway is pyrimidine metabolism; CTP biosynthesis via de novo pathway; UDP from UMP (UMPK route): step 1/1. Its activity is regulated as follows. Inhibited by UTP. Catalyzes the reversible phosphorylation of UMP to UDP. This is Uridylate kinase from Methylobacillus flagellatus (strain ATCC 51484 / DSM 6875 / VKM B-1610 / KT).